The following is a 275-amino-acid chain: Mitochondrial outer membrane protein porin (275 aa).

Position 1 is a blocked amino end (Met) (M1).

Belongs to the eukaryotic mitochondrial porin family. Highly divergent.

It localises to the mitochondrion outer membrane. Its function is as follows. Forms a channel of about 1,7 nM through the cell membrane that allows diffusion of small hydrophilic molecules. The channel adopts an open conformation at low or zero membrane potential and a closed conformation at potentials above 20 mv. The open state has a weak anion selectivity whereas the closed state is cation-selective. This Dictyostelium discoideum (Social amoeba) protein is Mitochondrial outer membrane protein porin (porA).